The primary structure comprises 44 residues: Photosystem I reaction center subunit IX (44 aa).

A helical membrane pass occupies residues 7–27 (YLSTAPVLTTLWFGSLAGLLI).

The protein belongs to the PsaJ family.

It is found in the plastid. Its subcellular location is the chloroplast thylakoid membrane. Its function is as follows. May help in the organization of the PsaE and PsaF subunits. The protein is Photosystem I reaction center subunit IX of Phalaenopsis aphrodite subsp. formosana (Moth orchid).